Consider the following 701-residue polypeptide: DNA ligase (701 aa).

Residues 58-62 (DYEYD), 107-108 (SL), and Glu-138 each bind NAD(+). The active-site N6-AMP-lysine intermediate is the Lys-140. NAD(+) is bound by residues Arg-161, Glu-199, Lys-323, and Lys-347. 4 residues coordinate Zn(2+): Cys-441, Cys-444, Cys-459, and Cys-464. Residues 621-701 (EKRGKLAGLN…EEFLKMIGQQ (81 aa)) enclose the BRCT domain.

Belongs to the NAD-dependent DNA ligase family. LigA subfamily. The cofactor is Mg(2+). Mn(2+) serves as cofactor.

It carries out the reaction NAD(+) + (deoxyribonucleotide)n-3'-hydroxyl + 5'-phospho-(deoxyribonucleotide)m = (deoxyribonucleotide)n+m + AMP + beta-nicotinamide D-nucleotide.. DNA ligase that catalyzes the formation of phosphodiester linkages between 5'-phosphoryl and 3'-hydroxyl groups in double-stranded DNA using NAD as a coenzyme and as the energy source for the reaction. It is essential for DNA replication and repair of damaged DNA. This Sulfurihydrogenibium azorense (strain DSM 15241 / OCM 825 / Az-Fu1) protein is DNA ligase.